Reading from the N-terminus, the 514-residue chain is Peptide chain release factor 3 (514 aa).

The region spanning 8 to 268 (KKRRTFAIIS…TFLEFAPEPH (261 aa)) is the tr-type G domain. GTP is bound by residues 17–24 (SHPDAGKT), 85–89 (DTPGH), and 139–142 (NKLD).

It belongs to the TRAFAC class translation factor GTPase superfamily. Classic translation factor GTPase family. PrfC subfamily.

It localises to the cytoplasm. Functionally, increases the formation of ribosomal termination complexes and stimulates activities of RF-1 and RF-2. It binds guanine nucleotides and has strong preference for UGA stop codons. It may interact directly with the ribosome. The stimulation of RF-1 and RF-2 is significantly reduced by GTP and GDP, but not by GMP. The polypeptide is Peptide chain release factor 3 (Streptococcus pyogenes serotype M5 (strain Manfredo)).